Consider the following 206-residue polypeptide: 2,3-bisphosphoglycerate-dependent phosphoglycerate mutase (206 aa).

Substrate is bound by residues 9 to 16, 22 to 23, Arg61, 88 to 91, Lys99, 115 to 116, and 159 to 160; these read RHGQSEWN, TG, ERDY, RR, and GN. His10 functions as the Tele-phosphohistidine intermediate in the catalytic mechanism. The active-site Proton donor/acceptor is the Glu88.

The protein belongs to the phosphoglycerate mutase family. BPG-dependent PGAM subfamily. As to quaternary structure, homodimer.

It catalyses the reaction (2R)-2-phosphoglycerate = (2R)-3-phosphoglycerate. It functions in the pathway carbohydrate degradation; glycolysis; pyruvate from D-glyceraldehyde 3-phosphate: step 3/5. Functionally, catalyzes the interconversion of 2-phosphoglycerate and 3-phosphoglycerate. The protein is 2,3-bisphosphoglycerate-dependent phosphoglycerate mutase of Bartonella bacilliformis (strain ATCC 35685 / KC583 / Herrer 020/F12,63).